The chain runs to 176 residues: RNA pyrophosphohydrolase (176 aa).

A Nudix hydrolase domain is found at 6–149 (GYRPNVGIVI…KRDVYRRVMK (144 aa)). Positions 38–59 (GGINPGESAEQAMYRELFEEVG) match the Nudix box motif.

This sequence belongs to the Nudix hydrolase family. RppH subfamily. A divalent metal cation serves as cofactor.

Accelerates the degradation of transcripts by removing pyrophosphate from the 5'-end of triphosphorylated RNA, leading to a more labile monophosphorylated state that can stimulate subsequent ribonuclease cleavage. The chain is RNA pyrophosphohydrolase from Klebsiella pneumoniae (strain 342).